Here is a 232-residue protein sequence, read N- to C-terminus: 2-C-methyl-D-erythritol 4-phosphate cytidylyltransferase (232 aa).

The protein belongs to the IspD/TarI cytidylyltransferase family. IspD subfamily.

The catalysed reaction is 2-C-methyl-D-erythritol 4-phosphate + CTP + H(+) = 4-CDP-2-C-methyl-D-erythritol + diphosphate. Its pathway is isoprenoid biosynthesis; isopentenyl diphosphate biosynthesis via DXP pathway; isopentenyl diphosphate from 1-deoxy-D-xylulose 5-phosphate: step 2/6. Catalyzes the formation of 4-diphosphocytidyl-2-C-methyl-D-erythritol from CTP and 2-C-methyl-D-erythritol 4-phosphate (MEP). In Nitrosospira multiformis (strain ATCC 25196 / NCIMB 11849 / C 71), this protein is 2-C-methyl-D-erythritol 4-phosphate cytidylyltransferase.